Consider the following 564-residue polypeptide: Proline--tRNA ligase (564 aa).

The protein belongs to the class-II aminoacyl-tRNA synthetase family. ProS type 1 subfamily. Homodimer.

The protein resides in the cytoplasm. It catalyses the reaction tRNA(Pro) + L-proline + ATP = L-prolyl-tRNA(Pro) + AMP + diphosphate. Functionally, catalyzes the attachment of proline to tRNA(Pro) in a two-step reaction: proline is first activated by ATP to form Pro-AMP and then transferred to the acceptor end of tRNA(Pro). As ProRS can inadvertently accommodate and process non-cognate amino acids such as alanine and cysteine, to avoid such errors it has two additional distinct editing activities against alanine. One activity is designated as 'pretransfer' editing and involves the tRNA(Pro)-independent hydrolysis of activated Ala-AMP. The other activity is designated 'posttransfer' editing and involves deacylation of mischarged Ala-tRNA(Pro). The misacylated Cys-tRNA(Pro) is not edited by ProRS. The chain is Proline--tRNA ligase from Coxiella burnetii (strain Dugway 5J108-111).